The sequence spans 475 residues: Ornithine aminotransferase, mitochondrial (475 aa).

The N-terminal 16 residues, 1 to 16, are a transit peptide targeting the mitochondrion; the sequence is MAATTRRLLYYVSKRF. The segment at 23–43 is disordered; sequence RSYGGLPQSNSKSPPSSSQRL. Residues 29–41 are compositionally biased toward low complexity; sequence PQSNSKSPPSSSQ. Residues 142 to 143 and Phe177 each bind pyridoxal 5'-phosphate; that span reads GA. Arg180 is an L-ornithine binding site. 265–268 provides a ligand contact to pyridoxal 5'-phosphate; the sequence is DEVQ. An N6-(pyridoxal phosphate)lysine modification is found at Lys294. Residue Ser323 participates in L-ornithine binding. Position 324 (Thr324) interacts with pyridoxal 5'-phosphate.

Belongs to the class-III pyridoxal-phosphate-dependent aminotransferase family. As to quaternary structure, homotetramer. Requires pyridoxal 5'-phosphate as cofactor.

Its subcellular location is the mitochondrion matrix. It catalyses the reaction a 2-oxocarboxylate + L-ornithine = L-glutamate 5-semialdehyde + an L-alpha-amino acid. It functions in the pathway amino-acid biosynthesis; L-proline biosynthesis; L-glutamate 5-semialdehyde from L-ornithine: step 1/1. Functionally, mediates degradation of arginine for nitrogen recycling. Plays a role in non-host disease resistance by regulating pyrroline-5-carboxylate metabolism-induced hypersensitive response. The protein is Ornithine aminotransferase, mitochondrial of Arabidopsis thaliana (Mouse-ear cress).